The following is a 140-amino-acid chain: Putative nickel-responsive regulator (140 aa).

Residues His81, His92, His94, and Cys100 each coordinate Ni(2+).

This sequence belongs to the transcriptional regulatory CopG/NikR family. Ni(2+) serves as cofactor.

Its function is as follows. Transcriptional regulator. The chain is Putative nickel-responsive regulator from Methanococcoides burtonii (strain DSM 6242 / NBRC 107633 / OCM 468 / ACE-M).